A 147-amino-acid chain; its full sequence is Cilia- and flagella-associated protein 90 (147 aa).

Positions 1–36 (MEDDEEETTASTLRGKPRPPPVSAQSAFSYIPPRRL) are disordered.

Microtubule inner protein component of sperm flagellar doublet microtubules.

It is found in the cytoplasm. The protein localises to the cytoskeleton. The protein resides in the cilium axoneme. It localises to the flagellum axoneme. Its function is as follows. Microtubule inner protein (MIP) part of the dynein-decorated doublet microtubules (DMTs) in cilia axoneme, which is required for motile cilia beating. This Homo sapiens (Human) protein is Cilia- and flagella-associated protein 90.